A 225-amino-acid polypeptide reads, in one-letter code: MPIFTGSSSDSEDERTIHKTTKLFTRQRSIHSIFGGGKVADILLWREPKIAATLVIGVSILWFLMEVVEYNFITLICHASMTSMLFFFIWSTASDFLNWERPLIPEVVLDESSFKQLARSFHVRFNQILTKLLDVACGRDPPLFFLTTISLYIVSIIGTYFNFVNLLFIGFVSMQTLPVMYEMYEDDVDTAAGKLMRKMKKLYKKVDTNVLSKIPRGTVKNKKFT.

Residues 39–224 (VADILLWREP…PRGTVKNKKF (186 aa)) enclose the Reticulon domain. 3 helical membrane passes run 50-70 (IAAT…VVEY), 72-92 (FITL…IWST), and 152-172 (YIVS…IGFV).

It localises to the endoplasmic reticulum membrane. This Arabidopsis thaliana (Mouse-ear cress) protein is Reticulon-like protein B9 (RTNLB9).